Here is a 336-residue protein sequence, read N- to C-terminus: Ketol-acid reductoisomerase (NADP(+)) (336 aa).

Residues 2-181 (AKVYYEKDVM…GATRAGVLET (180 aa)) enclose the KARI N-terminal Rossmann domain. Residues 25-28 (YGSQ), arginine 48, serine 52, and 82-85 (DELQ) each bind NADP(+). Histidine 107 is an active-site residue. Glycine 133 is a binding site for NADP(+). In terms of domain architecture, KARI C-terminal knotted spans 182–327 (TFKEETETDL…RQLREMMPFV (146 aa)). Residues aspartate 190, glutamate 194, glutamate 226, and glutamate 230 each coordinate Mg(2+). Serine 251 serves as a coordination point for substrate.

It belongs to the ketol-acid reductoisomerase family. It depends on Mg(2+) as a cofactor.

It carries out the reaction (2R)-2,3-dihydroxy-3-methylbutanoate + NADP(+) = (2S)-2-acetolactate + NADPH + H(+). The enzyme catalyses (2R,3R)-2,3-dihydroxy-3-methylpentanoate + NADP(+) = (S)-2-ethyl-2-hydroxy-3-oxobutanoate + NADPH + H(+). The protein operates within amino-acid biosynthesis; L-isoleucine biosynthesis; L-isoleucine from 2-oxobutanoate: step 2/4. It participates in amino-acid biosynthesis; L-valine biosynthesis; L-valine from pyruvate: step 2/4. Involved in the biosynthesis of branched-chain amino acids (BCAA). Catalyzes an alkyl-migration followed by a ketol-acid reduction of (S)-2-acetolactate (S2AL) to yield (R)-2,3-dihydroxy-isovalerate. In the isomerase reaction, S2AL is rearranged via a Mg-dependent methyl migration to produce 3-hydroxy-3-methyl-2-ketobutyrate (HMKB). In the reductase reaction, this 2-ketoacid undergoes a metal-dependent reduction by NADPH to yield (R)-2,3-dihydroxy-isovalerate. This is Ketol-acid reductoisomerase (NADP(+)) from Bacillus cytotoxicus (strain DSM 22905 / CIP 110041 / 391-98 / NVH 391-98).